The sequence spans 352 residues: [Citrate [pro-3S]-lyase] ligase (352 aa).

Positions 1 to 128 constitute an N-acetyltransferase domain; it reads MFGNDIFTRV…VMVLMENSAT (128 aa).

It catalyses the reaction holo-[citrate lyase ACP] + acetate + ATP = acetyl-[citrate lyase ACP] + AMP + diphosphate. In terms of biological role, acetylation of prosthetic group (2-(5''-phosphoribosyl)-3'-dephosphocoenzyme-A) of the gamma subunit of citrate lyase. The protein is [Citrate [pro-3S]-lyase] ligase (citC) of Escherichia coli (strain K12).